The primary structure comprises 261 residues: uncharacterized protein (261 aa).

22-46 (IVTGGNSGLGQAFAMALAKAGANIF) lines the NADP(+) pocket. Ser153 provides a ligand contact to substrate. Residue Tyr166 is the Proton acceptor of the active site.

It belongs to the short-chain dehydrogenases/reductases (SDR) family.

This is an uncharacterized protein from Escherichia coli (strain K12).